A 90-amino-acid polypeptide reads, in one-letter code: Small ribosomal subunit protein bS18 (90 aa).

Belongs to the bacterial ribosomal protein bS18 family. Part of the 30S ribosomal subunit. Forms a tight heterodimer with protein bS6.

Its function is as follows. Binds as a heterodimer with protein bS6 to the central domain of the 16S rRNA, where it helps stabilize the platform of the 30S subunit. The polypeptide is Small ribosomal subunit protein bS18 (Bordetella bronchiseptica (strain ATCC BAA-588 / NCTC 13252 / RB50) (Alcaligenes bronchisepticus)).